Reading from the N-terminus, the 261-residue chain is Kallikrein 1-related peptidase b21 (261 aa).

The N-terminal stretch at Met-1 to Ala-17 is a signal peptide. The propeptide at Ala-18 to Arg-24 is activation peptide. The Peptidase S1 domain maps to Ile-25–Ala-258. 5 disulfide bridges follow: Cys-31-Cys-173, Cys-50-Cys-66, Cys-152-Cys-219, Cys-184-Cys-198, and Cys-209-Cys-234. The Charge relay system role is filled by His-65. N-linked (GlcNAc...) asparagine glycosylation occurs at Asn-102. The active-site Charge relay system is Asp-120. Ser-213 acts as the Charge relay system in catalysis.

Belongs to the peptidase S1 family. Kallikrein subfamily. Expressed in testis and submaxillary gland. In the testis, expression localized specifically to Leydig cells in the interstitial tissues.

It catalyses the reaction Preferential cleavage of Arg-|-Xaa bonds in small molecule substrates. Highly selective action to release kallidin (lysyl-bradykinin) from kininogen involves hydrolysis of Met-|-Xaa or Leu-|-Xaa.. With respect to regulation, inhibited by protease inhibitors diisopropylfluorophosphate, leupeptin, antipain, benzamidine, phenylmethylsulfonyl fluoride and soybean trypsin inhibitor. Glandular kallikreins cleave Met-Lys and Arg-Ser bonds in kininogen to release Lys-bradykinin. Displays trypsin-like substrate specificity and shows activity towards casein, gelatin, fibronectin and IGFBP3. The protein is Kallikrein 1-related peptidase b21 (Klk1b21) of Mus musculus (Mouse).